The chain runs to 261 residues: tRNA pseudouridine synthase A (261 aa).

Aspartate 51 (nucleophile) is an active-site residue. Tyrosine 109 is a substrate binding site.

The protein belongs to the tRNA pseudouridine synthase TruA family. Homodimer.

It carries out the reaction uridine(38/39/40) in tRNA = pseudouridine(38/39/40) in tRNA. Formation of pseudouridine at positions 38, 39 and 40 in the anticodon stem and loop of transfer RNAs. The protein is tRNA pseudouridine synthase A of Shewanella piezotolerans (strain WP3 / JCM 13877).